The chain runs to 201 residues: dITP/XTP pyrophosphatase (201 aa).

Thr8–Lys13 provides a ligand contact to substrate. Mg(2+)-binding residues include Glu41 and Asp73. Asp73 (proton acceptor) is an active-site residue. Residues Ser74, Phe154 to Asp157, Lys177, and His182 to Arg183 contribute to the substrate site.

It belongs to the HAM1 NTPase family. In terms of assembly, homodimer. Mg(2+) serves as cofactor.

The enzyme catalyses XTP + H2O = XMP + diphosphate + H(+). It carries out the reaction dITP + H2O = dIMP + diphosphate + H(+). It catalyses the reaction ITP + H2O = IMP + diphosphate + H(+). Functionally, pyrophosphatase that catalyzes the hydrolysis of nucleoside triphosphates to their monophosphate derivatives, with a high preference for the non-canonical purine nucleotides XTP (xanthosine triphosphate), dITP (deoxyinosine triphosphate) and ITP. Seems to function as a house-cleaning enzyme that removes non-canonical purine nucleotides from the nucleotide pool, thus preventing their incorporation into DNA/RNA and avoiding chromosomal lesions. The chain is dITP/XTP pyrophosphatase from Clostridium tetani (strain Massachusetts / E88).